Consider the following 450-residue polypeptide: UDP-N-acetylmuramoylalanine--D-glutamate ligase (450 aa).

Residue 115-121 (GTNGKST) participates in ATP binding.

This sequence belongs to the MurCDEF family.

The protein localises to the cytoplasm. It carries out the reaction UDP-N-acetyl-alpha-D-muramoyl-L-alanine + D-glutamate + ATP = UDP-N-acetyl-alpha-D-muramoyl-L-alanyl-D-glutamate + ADP + phosphate + H(+). It participates in cell wall biogenesis; peptidoglycan biosynthesis. Cell wall formation. Catalyzes the addition of glutamate to the nucleotide precursor UDP-N-acetylmuramoyl-L-alanine (UMA). The chain is UDP-N-acetylmuramoylalanine--D-glutamate ligase from Syntrophotalea carbinolica (strain DSM 2380 / NBRC 103641 / GraBd1) (Pelobacter carbinolicus).